Here is a 91-residue protein sequence, read N- to C-terminus: Elongation factor 1-beta (91 aa).

The protein belongs to the EF-1-beta/EF-1-delta family.

Promotes the exchange of GDP for GTP in EF-1-alpha/GDP, thus allowing the regeneration of EF-1-alpha/GTP that could then be used to form the ternary complex EF-1-alpha/GTP/AAtRNA. In Pyrococcus horikoshii (strain ATCC 700860 / DSM 12428 / JCM 9974 / NBRC 100139 / OT-3), this protein is Elongation factor 1-beta (ef1b).